The following is a 396-amino-acid chain: NADH-quinone oxidoreductase subunit D (396 aa).

The protein belongs to the complex I 49 kDa subunit family. NDH-1 is composed of 14 different subunits. Subunits NuoB, C, D, E, F, and G constitute the peripheral sector of the complex.

It is found in the cell inner membrane. The catalysed reaction is a quinone + NADH + 5 H(+)(in) = a quinol + NAD(+) + 4 H(+)(out). Its function is as follows. NDH-1 shuttles electrons from NADH, via FMN and iron-sulfur (Fe-S) centers, to quinones in the respiratory chain. The immediate electron acceptor for the enzyme in this species is believed to be ubiquinone. Couples the redox reaction to proton translocation (for every two electrons transferred, four hydrogen ions are translocated across the cytoplasmic membrane), and thus conserves the redox energy in a proton gradient. The sequence is that of NADH-quinone oxidoreductase subunit D from Brucella suis biovar 1 (strain 1330).